The primary structure comprises 431 residues: Probable pectate lyase 1 (431 aa).

Residues 1 to 20 (MAVLPTWLLAMMCLLFFVGA) form the signal peptide. N-linked (GlcNAc...) asparagine glycans are attached at residues Asn23, Asn28, and Asn65. Residues Asp227, Asp251, and Asp255 each contribute to the Ca(2+) site. Arg307 is an active-site residue.

This sequence belongs to the polysaccharide lyase 1 family. Requires Ca(2+) as cofactor. Expressed in flowers, but not in leaves.

The catalysed reaction is Eliminative cleavage of (1-&gt;4)-alpha-D-galacturonan to give oligosaccharides with 4-deoxy-alpha-D-galact-4-enuronosyl groups at their non-reducing ends.. Its pathway is glycan metabolism; pectin degradation; 2-dehydro-3-deoxy-D-gluconate from pectin: step 2/5. This chain is Probable pectate lyase 1, found in Arabidopsis thaliana (Mouse-ear cress).